Reading from the N-terminus, the 1159-residue chain is DNA polymerase III subunit alpha (1159 aa).

The protein belongs to the DNA polymerase type-C family. DnaE subfamily. DNA polymerase III contains a core (composed of alpha, epsilon and theta chains) that associates with a tau subunit. This core dimerizes to form the PolIII' complex. PolIII' associates with the gamma complex (composed of gamma, delta, delta', psi and chi chains) and with the beta chain to form the complete DNA polymerase III complex.

The protein resides in the cytoplasm. It carries out the reaction DNA(n) + a 2'-deoxyribonucleoside 5'-triphosphate = DNA(n+1) + diphosphate. Its function is as follows. DNA polymerase III is a complex, multichain enzyme responsible for most of the replicative synthesis in bacteria. This DNA polymerase also exhibits 3' to 5' exonuclease activity. The alpha chain is the DNA polymerase. The sequence is that of DNA polymerase III subunit alpha (dnaE) from Pasteurella multocida (strain Pm70).